We begin with the raw amino-acid sequence, 381 residues long: Opsin-1 (381 aa).

The Extracellular segment spans residues 1 to 53 (MASASLISEPSFSAYWGGSGGFANQTVVDKVPPEMLYLVDPHWYQFPPMNPLW). The N-linked (GlcNAc...) asparagine glycan is linked to Asn24. A helical membrane pass occupies residues 54-78 (HGLLGFVIGVLGVISVIGNGMVIYI). At 79 to 90 (FSTTKSLRTPSN) the chain is on the cytoplasmic side. A helical transmembrane segment spans residues 91–115 (LLVVNLAFSDFLMMFTMSAPMGINC). At 116–130 (YYETWVLGPFMCELY) the chain is on the extracellular side. Cys127 and Cys204 are oxidised to a cystine. A helical membrane pass occupies residues 131-150 (ALFGSLFGCGSIWTMTMIAL). At 151–169 (DRYNVIVKGLSAKPMTNKT) the chain is on the cytoplasmic side. Residues 170-193 (AMLRILFIWAFSVAWTIMPLFGWN) form a helical membrane-spanning segment. At 194–217 (RYVPEGNMTACGTDYLTKDWVSRS) the chain is on the extracellular side. N-linked (GlcNAc...) asparagine glycosylation occurs at Asn200. Residues 218–245 (YILVYSFFVYLLPLGTIIYSYFFILQAV) traverse the membrane as a helical segment. Over 246–280 (SAHEKQMREQRKKMNVASLRSAEASQTSAECKLAK) the chain is Cytoplasmic. Residues 281-304 (VALMTISLWFFGWTPYLIINFTGI) traverse the membrane as a helical segment. Topologically, residues 305-311 (FETMKIS) are extracellular. The helical transmembrane segment at 312–336 (PLLTIWGSLFAKANAVFNPIVYGIS) threads the bilayer. Lys323 bears the N6-(retinylidene)lysine mark. The Cytoplasmic portion of the chain corresponds to 337–381 (HPKYRAALEKKFPSLACASSSDDNTSVASGATTVSDEKSEKSASA). A compositionally biased stretch (polar residues) spans 354 to 370 (ASSSDDNTSVASGATTV). The tract at residues 354–381 (ASSSDDNTSVASGATTVSDEKSEKSASA) is disordered. Positions 371-381 (SDEKSEKSASA) are enriched in basic and acidic residues.

This sequence belongs to the G-protein coupled receptor 1 family. Opsin subfamily. Phosphorylated on some or all of the serine and threonine residues present in the C-terminal region.

The protein localises to the cell projection. It is found in the rhabdomere membrane. Visual pigments are the light-absorbing molecules that mediate vision. They consist of an apoprotein, opsin, covalently linked to cis-retinal. This Schistocerca gregaria (Desert locust) protein is Opsin-1 (Lo1).